The sequence spans 371 residues: Bifunctional enzyme IspD/IspF (371 aa).

A 2-C-methyl-D-erythritol 4-phosphate cytidylyltransferase region spans residues 1-214 (MNSCFIILAG…NSDIKFNNLI (214 aa)). The 2-C-methyl-D-erythritol 2,4-cyclodiphosphate synthase stretch occupies residues 215-371 (KFGIGFDVHR…EVIASVIKND (157 aa)). The a divalent metal cation site is built by Asp221 and His223. 4-CDP-2-C-methyl-D-erythritol 2-phosphate is bound by residues 221–223 (DVH) and 247–248 (HS). Residue His255 coordinates a divalent metal cation. 4-CDP-2-C-methyl-D-erythritol 2-phosphate contacts are provided by residues 269-271 (DIG), 274-278 (FSDKN), and Lys355.

It in the N-terminal section; belongs to the IspD/TarI cytidylyltransferase family. IspD subfamily. This sequence in the C-terminal section; belongs to the IspF family. A divalent metal cation is required as a cofactor.

The catalysed reaction is 2-C-methyl-D-erythritol 4-phosphate + CTP + H(+) = 4-CDP-2-C-methyl-D-erythritol + diphosphate. It catalyses the reaction 4-CDP-2-C-methyl-D-erythritol 2-phosphate = 2-C-methyl-D-erythritol 2,4-cyclic diphosphate + CMP. It functions in the pathway isoprenoid biosynthesis; isopentenyl diphosphate biosynthesis via DXP pathway; isopentenyl diphosphate from 1-deoxy-D-xylulose 5-phosphate: step 2/6. It participates in isoprenoid biosynthesis; isopentenyl diphosphate biosynthesis via DXP pathway; isopentenyl diphosphate from 1-deoxy-D-xylulose 5-phosphate: step 4/6. Functionally, bifunctional enzyme that catalyzes the formation of 4-diphosphocytidyl-2-C-methyl-D-erythritol from CTP and 2-C-methyl-D-erythritol 4-phosphate (MEP) (IspD), and catalyzes the conversion of 4-diphosphocytidyl-2-C-methyl-D-erythritol 2-phosphate (CDP-ME2P) to 2-C-methyl-D-erythritol 2,4-cyclodiphosphate (ME-CPP) with a corresponding release of cytidine 5-monophosphate (CMP) (IspF). In Pelagibacter ubique (strain HTCC1062), this protein is Bifunctional enzyme IspD/IspF.